A 560-amino-acid chain; its full sequence is Aluminum-activated malate transporter 12 (560 aa).

Transmembrane regions (helical) follow at residues V54 to I74, A78 to C98, G104 to S124, A130 to I150, N156 to Y176, and F189 to I209. Positions L386 to L421 are disordered. The span at N407–L421 shows a compositional bias: polar residues.

It belongs to the aromatic acid exporter (TC 2.A.85) family. As to expression, expressed in roots, stems, leaves, flowers and pollen. Mainly detected in the roots vascular stele and in the leaves guard cells.

It is found in the cell membrane. Functionally, malate-sensitive anion transporter permeable to chloride, nitrate, sulfate and malate. Involved in dark-, CO(2)-, abscisic acid- and water-deficient-induced stomatal closure. Belongs to the R-type anion channels. The protein is Aluminum-activated malate transporter 12 (ALMT12) of Arabidopsis thaliana (Mouse-ear cress).